The chain runs to 61 residues: Small ribosomal subunit protein uS14 (61 aa).

Zn(2+) contacts are provided by C24, C27, C40, and C43.

This sequence belongs to the universal ribosomal protein uS14 family. Zinc-binding uS14 subfamily. In terms of assembly, part of the 30S ribosomal subunit. Contacts proteins S3 and S10. Requires Zn(2+) as cofactor.

Functionally, binds 16S rRNA, required for the assembly of 30S particles and may also be responsible for determining the conformation of the 16S rRNA at the A site. The chain is Small ribosomal subunit protein uS14 from Deinococcus geothermalis (strain DSM 11300 / CIP 105573 / AG-3a).